We begin with the raw amino-acid sequence, 644 residues long: Chaperone protein DnaK (644 aa).

At threonine 199 the chain carries Phosphothreonine; by autocatalysis. The interval 605 to 644 is disordered; sequence KKSSEGQAAQGQTQSQESTKPVEEGVVDAEFEEVKEEDKK. Positions 609-623 are enriched in polar residues; sequence EGQAAQGQTQSQEST. Positions 629–644 are enriched in acidic residues; that stretch reads GVVDAEFEEVKEEDKK.

Belongs to the heat shock protein 70 family.

Acts as a chaperone. The chain is Chaperone protein DnaK from Legionella pneumophila (strain Paris).